A 390-amino-acid polypeptide reads, in one-letter code: MEEPGAQCAPPLAAGSQIAVPQANLSAAHSHNCSAEGYIYQDSIALPWKVLLVLLLALFTLATTLSNAFVVATVYRTRKLHTPANYLIASLAVTDLLVSILVMPISTMYTVTGRWTLGQVVCDLWLSSDITCCTASIMHLCVIALDRYWAITDAVEYSAKRTPKRAAIMIRLVWVFSICISLPPFFWRQAKAEEEVSECLVNTDHVLYTVYSTVGAFYLPTLLLIALYGRIYVEARSRILKQTPNRTGKRLTRAQLITDSPGSTTSVTSINSRAPDVPSESGSPVYVNQVKVRVSDALLEKKKLMAARERKATKTLGIILGVFIVCWLPFFIISLVMPICKDACWFHQAIFDFFTWLGYVNSLINPIIYTMSNEDFKQAFHKLIRFKCTS.

At 1 to 46 (MEEPGAQCAPPLAAGSQIAVPQANLSAAHSHNCSAEGYIYQDSIAL) the chain is on the extracellular side. Residues asparagine 24 and asparagine 32 are each glycosylated (N-linked (GlcNAc...) asparagine). Residues 47-72 (PWKVLLVLLLALFTLATTLSNAFVVA) form a helical membrane-spanning segment. The Cytoplasmic portion of the chain corresponds to 73–86 (TVYRTRKLHTPANY). Residues 87–111 (LIASLAVTDLLVSILVMPISTMYTV) traverse the membrane as a helical segment. Residues 112–119 (TGRWTLGQ) lie on the Extracellular side of the membrane. Residues 120–145 (VVCDLWLSSDITCCTASIMHLCVIAL) traverse the membrane as a helical segment. A disulfide bond links cysteine 122 and cysteine 199. Ergotamine contacts are provided by aspartate 129 and threonine 134. The DRY motif; important for ligand-induced conformation changes and signaling motif lies at 146–148 (DRY). Residues 146–165 (DRYWAITDAVEYSAKRTPKR) are Cytoplasmic-facing. A helical membrane pass occupies residues 166–184 (AAIMIRLVWVFSICISLPP). Over 185–205 (FFWRQAKAEEEVSECLVNTDH) the chain is Extracellular. Residue valine 201 coordinates ergotamine. A helical transmembrane segment spans residues 206-229 (VLYTVYSTVGAFYLPTLLLIALYG). The Cytoplasmic segment spans residues 230–315 (RIYVEARSRI…AARERKATKT (86 aa)). Residues 260-272 (SPGSTTSVTSINS) are compositionally biased toward polar residues. The segment at 260-282 (SPGSTTSVTSINSRAPDVPSESG) is disordered. Residues 316-337 (LGIILGVFIVCWLPFFIISLVM) form a helical membrane-spanning segment. At 338 to 347 (PICKDACWFH) the chain is on the extracellular side. A helical membrane pass occupies residues 348 to 370 (QAIFDFFTWLGYVNSLINPIIYT). The NPxxY motif; important for ligand-induced conformation changes and signaling motif lies at 365-369 (NPIIY). At 371-390 (MSNEDFKQAFHKLIRFKCTS) the chain is on the cytoplasmic side. Residue cysteine 388 is the site of S-palmitoyl cysteine attachment.

This sequence belongs to the G-protein coupled receptor 1 family. In terms of assembly, homodimer. Heterodimer with HTR1D. In terms of processing, phosphorylated. Desensitization of the receptor may be mediated by its phosphorylation. Palmitoylated.

Its subcellular location is the cell membrane. Its function is as follows. G-protein coupled receptor for 5-hydroxytryptamine (serotonin). Also functions as a receptor for ergot alkaloid derivatives, various anxiolytic and antidepressant drugs and other psychoactive substances, such as lysergic acid diethylamide (LSD). Ligand binding causes a conformation change that triggers signaling via guanine nucleotide-binding proteins (G proteins) and modulates the activity of downstream effectors, such as adenylate cyclase. HTR1B is coupled to G(i)/G(o) G alpha proteins and mediates inhibitory neurotransmission by inhibiting adenylate cyclase activity. Arrestin family members inhibit signaling via G proteins and mediate activation of alternative signaling pathways. Regulates the release of 5-hydroxytryptamine, dopamine and acetylcholine in the brain, and thereby affects neural activity, nociceptive processing, pain perception, mood and behavior. Besides, plays a role in vasoconstriction of cerebral arteries. The protein is 5-hydroxytryptamine receptor 1B (HTR1B) of Oryctolagus cuniculus (Rabbit).